The sequence spans 43 residues: ORF7b protein (43 aa).

The helical transmembrane segment at Phe9 to Trp29 threads the bilayer.

The protein resides in the host Golgi apparatus membrane. It localises to the host endosome membrane. This is ORF7b protein from Homo sapiens (Human).